The primary structure comprises 253 residues: Hydroxyacylglutathione hydrolase (253 aa).

Zn(2+) contacts are provided by His-54, His-56, Asp-58, His-59, His-112, Asp-131, and His-169.

Belongs to the metallo-beta-lactamase superfamily. Glyoxalase II family. As to quaternary structure, monomer. The cofactor is Zn(2+).

The enzyme catalyses an S-(2-hydroxyacyl)glutathione + H2O = a 2-hydroxy carboxylate + glutathione + H(+). It participates in secondary metabolite metabolism; methylglyoxal degradation; (R)-lactate from methylglyoxal: step 2/2. Its function is as follows. Thiolesterase that catalyzes the hydrolysis of S-D-lactoyl-glutathione to form glutathione and D-lactic acid. The sequence is that of Hydroxyacylglutathione hydrolase from Bartonella quintana (strain Toulouse) (Rochalimaea quintana).